Here is a 154-residue protein sequence, read N- to C-terminus: Myoglobin (154 aa).

The Globin domain maps to 2-148; that stretch reads GLSDGEWQLV…FRNDIAAKYK (147 aa). Serine 4 is subject to Phosphoserine. Nitrite is bound at residue histidine 65. Residue histidine 65 participates in O2 binding. Threonine 68 bears the Phosphothreonine mark. Histidine 94 serves as a coordination point for heme b.

The protein belongs to the globin family. As to quaternary structure, monomeric.

Its subcellular location is the cytoplasm. The protein localises to the sarcoplasm. The enzyme catalyses Fe(III)-heme b-[protein] + nitric oxide + H2O = Fe(II)-heme b-[protein] + nitrite + 2 H(+). It catalyses the reaction H2O2 + AH2 = A + 2 H2O. Monomeric heme protein which primary function is to store oxygen and facilitate its diffusion within muscle tissues. Reversibly binds oxygen through a pentacoordinated heme iron and enables its timely and efficient release as needed during periods of heightened demand. Depending on the oxidative conditions of tissues and cells, and in addition to its ability to bind oxygen, it also has a nitrite reductase activity whereby it regulates the production of bioactive nitric oxide. Under stress conditions, like hypoxia and anoxia, it also protects cells against reactive oxygen species thanks to its pseudoperoxidase activity. The polypeptide is Myoglobin (MB) (Vulpes chama (Cape fox)).